The sequence spans 157 residues: Cyclic pyranopterin monophosphate synthase (157 aa).

Substrate is bound by residues 74–76 (MCH) and 110–111 (ME). Asp125 is a catalytic residue.

This sequence belongs to the MoaC family. In terms of assembly, homohexamer; trimer of dimers.

The enzyme catalyses (8S)-3',8-cyclo-7,8-dihydroguanosine 5'-triphosphate = cyclic pyranopterin phosphate + diphosphate. The protein operates within cofactor biosynthesis; molybdopterin biosynthesis. Catalyzes the conversion of (8S)-3',8-cyclo-7,8-dihydroguanosine 5'-triphosphate to cyclic pyranopterin monophosphate (cPMP). The polypeptide is Cyclic pyranopterin monophosphate synthase (Peptoclostridium acidaminophilum (Eubacterium acidaminophilum)).